We begin with the raw amino-acid sequence, 197 residues long: Ion-translocating oxidoreductase complex subunit B (197 aa).

The segment at 1 to 26 (MSTILIAIIALAVLAAVFGAILGFAS) is hydrophobic. The 4Fe-4S domain occupies 32–90 (EADPIVDQIDTILPQTQCGQCGYPGCRPYAEAIANGDKINKCPPGGQATIEKLADLMGV). [4Fe-4S] cluster contacts are provided by Cys49, Cys52, Cys57, Cys73, Cys114, Cys117, Cys120, Cys124, Cys144, Cys147, Cys150, and Cys154. 4Fe-4S ferredoxin-type domains are found at residues 105–134 (TVAF…GGTK) and 135–164 (ALHT…MIPV).

It belongs to the 4Fe4S bacterial-type ferredoxin family. RnfB subfamily. As to quaternary structure, the complex is composed of six subunits: RnfA, RnfB, RnfC, RnfD, RnfE and RnfG. The cofactor is [4Fe-4S] cluster.

The protein localises to the cell inner membrane. Part of a membrane-bound complex that couples electron transfer with translocation of ions across the membrane. The protein is Ion-translocating oxidoreductase complex subunit B of Vibrio atlanticus (strain LGP32) (Vibrio splendidus (strain Mel32)).